We begin with the raw amino-acid sequence, 291 residues long: Phosphatidylglycerol--prolipoprotein diacylglyceryl transferase (291 aa).

4 helical membrane-spanning segments follow: residues 24 to 44 (WYALAYIGGIMLGWLYARALL), 64 to 84 (FILWVTIAIIVGGRVGYVLFY), 100 to 120 (WNGGMSFHGGFMGCVAAVILF), and 125 to 145 (GLPILSLGDVATAVGPIGLFL). Arginine 147 is an a 1,2-diacyl-sn-glycero-3-phospho-(1'-sn-glycerol) binding site. A run of 3 helical transmembrane segments spans residues 187–207 (AALEGILLFTILALMIRLGAL), 211–231 (GLVLGSFIALYAMARIVAEFF), and 247–267 (MGMLLSIPMVIIGLAIVYAAW).

Belongs to the Lgt family.

It localises to the cell inner membrane. It catalyses the reaction L-cysteinyl-[prolipoprotein] + a 1,2-diacyl-sn-glycero-3-phospho-(1'-sn-glycerol) = an S-1,2-diacyl-sn-glyceryl-L-cysteinyl-[prolipoprotein] + sn-glycerol 1-phosphate + H(+). Its pathway is protein modification; lipoprotein biosynthesis (diacylglyceryl transfer). In terms of biological role, catalyzes the transfer of the diacylglyceryl group from phosphatidylglycerol to the sulfhydryl group of the N-terminal cysteine of a prolipoprotein, the first step in the formation of mature lipoproteins. The polypeptide is Phosphatidylglycerol--prolipoprotein diacylglyceryl transferase (Nitrobacter winogradskyi (strain ATCC 25391 / DSM 10237 / CIP 104748 / NCIMB 11846 / Nb-255)).